The primary structure comprises 867 residues: MKKLYFPHQIERIVQQHWNDNQTFSVTEDKNKQKFYCLSMLPYPSGNLHMGHVRNYTIGDVISRYQRMLGKNVLQPIGWDAFGLPAEQAAIIHKKNPSDWTYSNIQYMKQQLKSLGFAYDWKRELITNDPQYYRWEQWFFIILYEKGLVYRKTTLVNWCPYHNTVLANEQVINGGCWRCHTKIQYKKIPQWFIKITHYADQLLNGLNQLQYWPEQVKTMQRNWIGQSTGTNVIFKILNSNITTITVYIARLDTFMGISYLTISVDHPITLQIAKINPDLANFISIYNTISIQLHNKQFICHKKKGIFTNLYAVHPITFTKLPIWVANFITPLEFDGQGAIASCPAHDQHDWEFAHQYDLPIKPVIKYADGELPNITNQAMIEPGILFNSDNFDDLTSHTAINYISKKLIDLKIAKTKIFYHLQDWGVSRQRYWGVPIPMIKLKNGIIQPVPKSELPVILPEIIYTKNNENNILSKNFNWTHTTYKNQDVIRDTDTFDTFMESSWYYARYTCPHYHDGMLQSDAANYWLPIDQYIGGIEHATMHLMYFRFYHKLMRDIGLIQSNEPAIRLLCQGMILADSFYYISNDGQKNWVSPNKVISTRDKMGHIIKSIDADGNNVIYAGLCKMSKSKNNGIDPNAMIQKYGADAVRFFIMFAAPAHSTLEWKESGIEGALRFLKRLWNITYQHIQNGLIHQLNMYKLENKHKIIRQKVHETIIKVTDDIDRRQSFNTALAAIMKLFNDIQDIFPINNTQDRSVLHEALSIIVKLLYPFTPHISYILWKELGYTNTIDDTTWPTPDLQAIQTQEILIIVQINGKKKKKIFVPINSDKNTIHEIAKQAIYQDKNLESKYVHKIIYIPNKIINFITK.

The short motif at 42–52 is the 'HIGH' region element; it reads PYPSGNLHMGH. Positions 625–629 match the 'KMSKS' region motif; it reads KMSKS. K628 provides a ligand contact to ATP.

The protein belongs to the class-I aminoacyl-tRNA synthetase family.

The protein localises to the cytoplasm. The enzyme catalyses tRNA(Leu) + L-leucine + ATP = L-leucyl-tRNA(Leu) + AMP + diphosphate. This Blochmanniella floridana protein is Leucine--tRNA ligase.